Consider the following 177-residue polypeptide: PBAN-type neuropeptides (177 aa).

An N-terminal signal peptide occupies residues Met-1–Gly-23. The propeptide occupies Glu-24–Lys-54. Residues Glu-28 to Arg-73 form a disordered region. Residues Ser-31 to Gly-45 show a composition bias toward polar residues. Residues Cys-47–Thr-59 are compositionally biased toward low complexity. Leu-74 bears the Leucine amide mark. Residues His-78–Glu-113 constitute a propeptide that is removed on maturation. Leu-124, Leu-154, and Leu-166 each carry leucine amide. A propeptide spanning residues Gln-169–Ile-177 is cleaved from the precursor.

The protein belongs to the pyrokinin family. Pyrokinins (PK) 1 to 4 are expressed in the retrocerebral complex. PK 1 is expressed in central brain, anntennal lobes and abominal ganglia. PK 2 is expressed in optical lobes and in gnathal, thoracic and abdominal ganglia. PK 3 is expressed in optical lobes and in thoracic and abdominal ganglia (at protein level).

The protein resides in the secreted. Its function is as follows. Pyrokinins mediate visceral muscle contractile activity (myotropic activity). The polypeptide is PBAN-type neuropeptides (Camponotus floridanus (Florida carpenter ant)).